An 862-amino-acid polypeptide reads, in one-letter code: Protein SEY1 (862 aa).

At 1-743 (MASNGHFSSV…KRSAIGGITQ (743 aa)) the chain is on the cytoplasmic side. The region spanning 48 to 301 (GFNYHLISVF…IPADGFAVYA (254 aa)) is the GB1/RHD3-type G domain. Position 58-65 (58-65 (GSQSTGKS)) interacts with GTP. Residues 476–500 (SDYKQELSLFQKDLEKISSQLRKDE) are a coiled coil. The chain crosses the membrane as a helical span at residues 744–764 (VPLYFYGLLLALGWNEIIAVL). Over 765 to 767 (RNP) the chain is Lumenal. Residues 768-788 (IYFIFLLLIGVGAYVTFRLNL) form a helical membrane-spanning segment. Over 789–862 (WGPMINMAEA…TSDDDNDDDL (74 aa)) the chain is Cytoplasmic. The segment at 818–862 (SDSGRQAMAMSGRNARGTEEYEMSSNLKSKGRRTDTSDDDNDDDL) is disordered.

The protein belongs to the TRAFAC class dynamin-like GTPase superfamily. GB1/RHD3 GTPase family. RHD3 subfamily.

It is found in the endoplasmic reticulum membrane. In terms of biological role, cooperates with the reticulon proteins and tubule-shaping DP1 family proteins to generate and maintain the structure of the tubular endoplasmic reticulum network. Has GTPase activity, which is required for its function in ER organization. The chain is Protein SEY1 from Arthroderma otae (strain ATCC MYA-4605 / CBS 113480) (Microsporum canis).